Here is a 374-residue protein sequence, read N- to C-terminus: 3-isopropylmalate dehydrogenase (374 aa).

83 to 96 (GPKWDNLPPEIRPE) serves as a coordination point for NAD(+). Residues Arg-104, Arg-114, Arg-142, and Asp-231 each coordinate substrate. Mg(2+) contacts are provided by Asp-231, Asp-255, and Asp-259. NAD(+) is bound at residue 288–300 (GSAPDIAGQNKAN).

The protein belongs to the isocitrate and isopropylmalate dehydrogenases family. LeuB type 1 subfamily. In terms of assembly, homodimer. The cofactor is Mg(2+). Mn(2+) is required as a cofactor.

It localises to the cytoplasm. The catalysed reaction is (2R,3S)-3-isopropylmalate + NAD(+) = 4-methyl-2-oxopentanoate + CO2 + NADH. The protein operates within amino-acid biosynthesis; L-leucine biosynthesis; L-leucine from 3-methyl-2-oxobutanoate: step 3/4. In terms of biological role, catalyzes the oxidation of 3-carboxy-2-hydroxy-4-methylpentanoate (3-isopropylmalate) to 3-carboxy-4-methyl-2-oxopentanoate. The product decarboxylates to 4-methyl-2 oxopentanoate. In Carboxydothermus hydrogenoformans (strain ATCC BAA-161 / DSM 6008 / Z-2901), this protein is 3-isopropylmalate dehydrogenase.